We begin with the raw amino-acid sequence, 555 residues long: Disabled homolog 1 (555 aa).

Residues 1–26 form a disordered region; that stretch reads MSTETELQVAVKTSAKKDSRKKGQDR. Residues 15 to 26 are compositionally biased toward basic and acidic residues; it reads AKKDSRKKGQDR. Residues 36–189 form the PID domain; that stretch reads KGEGVRYKAK…CEQAVYQTIL (154 aa). Residues Tyr198, Tyr220, and Tyr232 each carry the phosphotyrosine modification. 2 disordered regions span residues 386 to 409 and 469 to 555; these read PLATVPGTNDSARSSPQSDKPRQK and LTPV…QDGS. A compositionally biased stretch (polar residues) spans 391-403; that stretch reads PGTNDSARSSPQS. Composition is skewed to low complexity over residues 470–479 and 490–501; these read TPVTSTTPST and SSPSKSSASHVS. Ser491 bears the Phosphoserine; by CDK5 mark. The segment covering 504-513 has biased composition (acidic residues); the sequence is TADDIFEEGF.

In terms of assembly, associates with the SH2 domains of SRC, FYN and ABL. Interacts (phosphorylated on tyrosine residues) with CRK and CRKL (via respective SH2 domain). Interacts with SIAH1, LRP8 and VLDLR. Interacts with LRP1. Interacts with APLP1 (via NPXY motif). Interacts with DAB2IP. Interacts with ZSWIM8. Phosphorylated by FYN on Tyr-198 and Tyr-220 upon reelin induction in embryonic neurons. Also phosphorylated on Ser-491 independently of reelin signaling. In terms of processing, ubiquitinated by various cullin-5-RING E3 ubiquitin-protein ligase complexes (ECS complexes) following ligand-binding and phosphorylation, leading to its degradation. Ubiquitinated by the ECS(SOCS7) complex in the cortical plate of the developing cerebral cortex following ligand-binding and phosphorylation by FYN, leading to its degradation by the proteasome. Recognized by ZSWIM8 through a disorder targets misorder mechanism that eliminates misfolded DAB1 via ubiquitination and proteasomal degradation.

It is found in the cytoplasm. Signaling adapter of the reelin-mediated signaling pathway, which regulates the migration and differentiation of postmitotic neurons during brain development. Mediates intracellular transduction of Reelin signaling following reelin (RELN)-binding to its receptor: acts by docking proteins through its phosphotyrosine residues and PID domain. The polypeptide is Disabled homolog 1 (Dab1) (Rattus norvegicus (Rat)).